We begin with the raw amino-acid sequence, 235 residues long: Uridylate kinase (235 aa).

Residue 9 to 12 coordinates ATP; sequence KLSG. Residues 17-22 are involved in allosteric activation by GTP; it reads GDQGYG. Position 51 (Gly51) interacts with UMP. Residues Gly52 and Arg56 each contribute to the ATP site. UMP contacts are provided by residues Asp71 and 132–139; that span reads CGNPFFTT. Positions 159, 165, and 168 each coordinate ATP.

The protein belongs to the UMP kinase family. In terms of assembly, homohexamer.

Its subcellular location is the cytoplasm. The enzyme catalyses UMP + ATP = UDP + ADP. Its pathway is pyrimidine metabolism; CTP biosynthesis via de novo pathway; UDP from UMP (UMPK route): step 1/1. With respect to regulation, allosterically activated by GTP. Inhibited by UTP. Its function is as follows. Catalyzes the reversible phosphorylation of UMP to UDP. This is Uridylate kinase from Synechococcus sp. (strain WH7803).